Reading from the N-terminus, the 327-residue chain is Poly(ribitol-phosphate) beta-N-acetylglucosaminyltransferase TarP (327 aa).

Residues Pro-9, Asp-41, Asn-68, Arg-76, and 92-94 each bind UDP-N-acetyl-alpha-D-glucosamine; that span reads DSD. Mn(2+) is bound at residue Asp-94. Asp-181 functions as the Proton acceptor in the catalytic mechanism.

It belongs to the glycosyltransferase 2 family. In terms of assembly, homotrimer. Mn(2+) is required as a cofactor.

It catalyses the reaction 4-O-[(D-ribitylphospho)(n)-di{(2R)-glycerylphospho}]-N-acetyl-beta-D-mannosaminyl-(1-&gt;4)-N-acetyl-alpha-D-glucosaminyl di-trans,octa-cis-undecaprenyl diphosphate + n UDP-N-acetyl-alpha-D-glucosamine = 4-O-([3-N-acetyl-beta-D-glucosaminyl-1-D-ribitylphospho](n)-di{[2R]-1-glycerylphospho})-N-acetyl-beta-D-mannosaminyl-(1-&gt;4)-N-acetyl-alpha-D-glucosaminyl di-trans,octa-cis-undecaprenyl diphosphate + n UDP + n H(+). The protein operates within cell wall biogenesis; poly(ribitol phosphate) teichoic acid biosynthesis. Its function is as follows. Attaches beta-O-GlcNAc (beta-O-N-acetyl-D-glucosamine) residues to the C3 position of poly(RboP)-wall teichoic acids (WTAs). Attenuates immunogenicity of WTA and protects S.aureus against adaptative host defenses by allowing bacteria to evade recognition by preexisting anti-S.aureus antibodies. Also protects the cell from podophage infection. The polypeptide is Poly(ribitol-phosphate) beta-N-acetylglucosaminyltransferase TarP (Staphylococcus aureus (strain N315)).